The sequence spans 231 residues: 7-cyano-7-deazaguanine synthase (231 aa).

8–18 (FSGGQDSTTCL) lines the ATP pocket. Cys188, Cys197, Cys200, and Cys203 together coordinate Zn(2+).

It belongs to the QueC family. It depends on Zn(2+) as a cofactor.

It catalyses the reaction 7-carboxy-7-deazaguanine + NH4(+) + ATP = 7-cyano-7-deazaguanine + ADP + phosphate + H2O + H(+). Its pathway is purine metabolism; 7-cyano-7-deazaguanine biosynthesis. In terms of biological role, catalyzes the ATP-dependent conversion of 7-carboxy-7-deazaguanine (CDG) to 7-cyano-7-deazaguanine (preQ(0)). In Salmonella agona (strain SL483), this protein is 7-cyano-7-deazaguanine synthase.